The following is a 95-amino-acid chain: Aspartyl/glutamyl-tRNA(Asn/Gln) amidotransferase subunit C (95 aa).

Belongs to the GatC family. Heterotrimer of A, B and C subunits.

It carries out the reaction L-glutamyl-tRNA(Gln) + L-glutamine + ATP + H2O = L-glutaminyl-tRNA(Gln) + L-glutamate + ADP + phosphate + H(+). It catalyses the reaction L-aspartyl-tRNA(Asn) + L-glutamine + ATP + H2O = L-asparaginyl-tRNA(Asn) + L-glutamate + ADP + phosphate + 2 H(+). In terms of biological role, allows the formation of correctly charged Asn-tRNA(Asn) or Gln-tRNA(Gln) through the transamidation of misacylated Asp-tRNA(Asn) or Glu-tRNA(Gln) in organisms which lack either or both of asparaginyl-tRNA or glutaminyl-tRNA synthetases. The reaction takes place in the presence of glutamine and ATP through an activated phospho-Asp-tRNA(Asn) or phospho-Glu-tRNA(Gln). In Gluconobacter oxydans (strain 621H) (Gluconobacter suboxydans), this protein is Aspartyl/glutamyl-tRNA(Asn/Gln) amidotransferase subunit C.